The chain runs to 317 residues: Apolipoprotein E (317 aa).

Residues 1-18 (MKVLWAALLVTFLAGCQA) form the signal peptide. Repeat copies occupy residues 80-101 (ALMDETMKELKAYRSELEEQLT), 102-123 (PVAEETRARLSKELQAAQARLG), 124-145 (ADMEDVRGRLVQYRGEVQAMLG), 146-167 (QSTEELRARLASHLRKLRKRLL), 168-189 (RDADDLQKRLAVYQAGAREGAE), 190-211 (RGVSAIRERLGPLVEQGRVRAA), 212-233 (TVGSLAGQPLQERAQAWGERLR), and 234-255 (ARMEEVGGRTRDRLDEVKEQVA). An 8 X 22 AA approximate tandem repeats region spans residues 80 to 255 (ALMDETMKEL…RLDEVKEQVA (176 aa)). A Methionine sulfoxide modification is found at M143. Residue S147 is modified to Phosphoserine. The segment at 158-168 (HLRKLRKRLLR) is LDL and other lipoprotein receptors binding. A heparin-binding site is contributed by 162–165 (LRKR). Residues 210–290 (AATVGSLAGQ…SWFEPLVEDM (81 aa)) are lipid-binding and lipoprotein association. A heparin-binding site is contributed by 229–236 (GERLRARM). Positions 266 to 317 (QQIRLQAEAFQARLKSWFEPLVEDMQRQWAGLVEKVQAAVGTSAAPVPSDNH) are homooligomerization. Positions 278–290 (RLKSWFEPLVEDM) are specificity for association with VLDL.

Belongs to the apolipoprotein A1/A4/E family. In terms of assembly, homotetramer. May interact with ABCA1; functionally associated with ABCA1 in the biogenesis of HDLs. May interact with APP/A4 amyloid-beta peptide; the interaction is extremely stable in vitro but its physiological significance is unclear. May interact with MAPT. May interact with MAP2. In the cerebrospinal fluid, interacts with secreted SORL1. Interacts with PMEL; this allows the loading of PMEL luminal fragment on ILVs to induce fibril nucleation. APOE exists as multiple glycosylated and sialylated glycoforms within cells and in plasma. The extent of glycosylation and sialylation are tissue and context specific. Post-translationally, glycated in plasma VLDL. In terms of processing, phosphorylated by FAM20C in the extracellular medium.

It localises to the secreted. The protein localises to the extracellular space. The protein resides in the extracellular matrix. Its subcellular location is the extracellular vesicle. It is found in the endosome. It localises to the multivesicular body. In terms of biological role, APOE is an apolipoprotein, a protein associating with lipid particles, that mainly functions in lipoprotein-mediated lipid transport between organs via the plasma and interstitial fluids. APOE is a core component of plasma lipoproteins and is involved in their production, conversion and clearance. Apolipoproteins are amphipathic molecules that interact both with lipids of the lipoprotein particle core and the aqueous environment of the plasma. As such, APOE associates with chylomicrons, chylomicron remnants, very low density lipoproteins (VLDL) and intermediate density lipoproteins (IDL) but shows a preferential binding to high-density lipoproteins (HDL). It also binds a wide range of cellular receptors including the LDL receptor/LDLR, the LDL receptor-related proteins LRP1, LRP2 and LRP8 and the very low-density lipoprotein receptor/VLDLR that mediate the cellular uptake of the APOE-containing lipoprotein particles. Finally, APOE also has a heparin-binding activity and binds heparan-sulfate proteoglycans on the surface of cells, a property that supports the capture and the receptor-mediated uptake of APOE-containing lipoproteins by cells. A main function of APOE is to mediate lipoprotein clearance through the uptake of chylomicrons, VLDLs, and HDLs by hepatocytes. APOE is also involved in the biosynthesis by the liver of VLDLs as well as their uptake by peripheral tissues ensuring the delivery of triglycerides and energy storage in muscle, heart and adipose tissues. By participating in the lipoprotein-mediated distribution of lipids among tissues, APOE plays a critical role in plasma and tissues lipid homeostasis. APOE is also involved in two steps of reverse cholesterol transport, the HDLs-mediated transport of cholesterol from peripheral tissues to the liver, and thereby plays an important role in cholesterol homeostasis. First, it is functionally associated with ABCA1 in the biogenesis of HDLs in tissues. Second, it is enriched in circulating HDLs and mediates their uptake by hepatocytes. APOE also plays an important role in lipid transport in the central nervous system, regulating neuron survival and sprouting. The sequence is that of Apolipoprotein E (APOE) from Hylobates lar (Lar gibbon).